A 497-amino-acid chain; its full sequence is Guanosine-5'-triphosphate,3'-diphosphate pyrophosphatase (497 aa).

Belongs to the GppA/Ppx family. GppA subfamily.

The enzyme catalyses guanosine 3'-diphosphate 5'-triphosphate + H2O = guanosine 3',5'-bis(diphosphate) + phosphate + H(+). It participates in purine metabolism; ppGpp biosynthesis; ppGpp from GTP: step 2/2. Functionally, catalyzes the conversion of pppGpp to ppGpp. Guanosine pentaphosphate (pppGpp) is a cytoplasmic signaling molecule which together with ppGpp controls the 'stringent response', an adaptive process that allows bacteria to respond to amino acid starvation, resulting in the coordinated regulation of numerous cellular activities. The protein is Guanosine-5'-triphosphate,3'-diphosphate pyrophosphatase of Aliivibrio fischeri (strain ATCC 700601 / ES114) (Vibrio fischeri).